Consider the following 222-residue polypeptide: GTP cyclohydrolase 1 (222 aa).

Residues Cys-111, His-114, and Cys-182 each contribute to the Zn(2+) site.

The protein belongs to the GTP cyclohydrolase I family. In terms of assembly, homomer.

It catalyses the reaction GTP + H2O = 7,8-dihydroneopterin 3'-triphosphate + formate + H(+). The protein operates within cofactor biosynthesis; 7,8-dihydroneopterin triphosphate biosynthesis; 7,8-dihydroneopterin triphosphate from GTP: step 1/1. The protein is GTP cyclohydrolase 1 of Klebsiella pneumoniae (strain 342).